Here is a 309-residue protein sequence, read N- to C-terminus: ADP-L-glycero-D-manno-heptose-6-epimerase (309 aa).

NADP(+) contacts are provided by residues 10–11, 31–32, Lys-38, Lys-53, 75–79, and Asn-92; these read FI, DN, and LGACS. The Proton acceptor role is filled by Tyr-140. Lys-144 serves as a coordination point for NADP(+). Asn-169 contacts substrate. NADP(+)-binding residues include Val-170 and Lys-178. The active-site Proton acceptor is Lys-178. Substrate is bound by residues Ser-180, His-187, 201 to 204, Arg-209, and Tyr-272; that span reads FLGS.

The protein belongs to the NAD(P)-dependent epimerase/dehydratase family. HldD subfamily. Homopentamer. It depends on NADP(+) as a cofactor.

It catalyses the reaction ADP-D-glycero-beta-D-manno-heptose = ADP-L-glycero-beta-D-manno-heptose. The protein operates within nucleotide-sugar biosynthesis; ADP-L-glycero-beta-D-manno-heptose biosynthesis; ADP-L-glycero-beta-D-manno-heptose from D-glycero-beta-D-manno-heptose 7-phosphate: step 4/4. Functionally, catalyzes the interconversion between ADP-D-glycero-beta-D-manno-heptose and ADP-L-glycero-beta-D-manno-heptose via an epimerization at carbon 6 of the heptose. This Hamiltonella defensa subsp. Acyrthosiphon pisum (strain 5AT) protein is ADP-L-glycero-D-manno-heptose-6-epimerase.